Consider the following 119-residue polypeptide: Large ribosomal subunit protein bL19 (119 aa).

It belongs to the bacterial ribosomal protein bL19 family.

This protein is located at the 30S-50S ribosomal subunit interface and may play a role in the structure and function of the aminoacyl-tRNA binding site. The protein is Large ribosomal subunit protein bL19 of Photobacterium profundum (strain SS9).